A 430-amino-acid chain; its full sequence is Serine--tRNA ligase (430 aa).

237–239 (TAE) lines the L-serine pocket. Residue 268 to 270 (RSE) participates in ATP binding. Position 291 (Glu291) interacts with L-serine. Residue 355-358 (EISS) participates in ATP binding. Ser391 is an L-serine binding site.

This sequence belongs to the class-II aminoacyl-tRNA synthetase family. Type-1 seryl-tRNA synthetase subfamily. In terms of assembly, homodimer. The tRNA molecule binds across the dimer.

The protein resides in the cytoplasm. The catalysed reaction is tRNA(Ser) + L-serine + ATP = L-seryl-tRNA(Ser) + AMP + diphosphate + H(+). It catalyses the reaction tRNA(Sec) + L-serine + ATP = L-seryl-tRNA(Sec) + AMP + diphosphate + H(+). The protein operates within aminoacyl-tRNA biosynthesis; selenocysteinyl-tRNA(Sec) biosynthesis; L-seryl-tRNA(Sec) from L-serine and tRNA(Sec): step 1/1. Catalyzes the attachment of serine to tRNA(Ser). Is also able to aminoacylate tRNA(Sec) with serine, to form the misacylated tRNA L-seryl-tRNA(Sec), which will be further converted into selenocysteinyl-tRNA(Sec). This Salmonella paratyphi C (strain RKS4594) protein is Serine--tRNA ligase.